Here is a 488-residue protein sequence, read N- to C-terminus: RuvB-like helicase 1 (488 aa).

The span at 1 to 11 (MATANTSSGSM) shows a compositional bias: polar residues. Residues 1 to 29 (MATANTSSGSMNGVGPVTMDSSTSGASRE) are disordered. 87–94 (GGPGTGKT) serves as a coordination point for ATP.

It belongs to the RuvB family. As to quaternary structure, may form heterododecamers with RVB2. Component of the SWR1 chromatin remodeling complex, the INO80 chromatin remodeling complex, and of the R2TP complex.

It is found in the nucleus. The enzyme catalyses ATP + H2O = ADP + phosphate + H(+). DNA helicase which participates in several chromatin remodeling complexes, including the SWR1 and the INO80 complexes. The SWR1 complex mediates the ATP-dependent exchange of histone H2A for the H2A variant HZT1 leading to transcriptional regulation of selected genes by chromatin remodeling. The INO80 complex remodels chromatin by shifting nucleosomes and is involved in DNA repair. Also involved in pre-rRNA processing. This is RuvB-like helicase 1 (RVB1) from Mycosarcoma maydis (Corn smut fungus).